Reading from the N-terminus, the 88-residue chain is UPF0297 protein BPUM_2379 (88 aa).

Belongs to the UPF0297 family.

The sequence is that of UPF0297 protein BPUM_2379 from Bacillus pumilus (strain SAFR-032).